The following is a 498-amino-acid chain: MQTALYISVLIISSCGLVYELLAGTIASYLLGETVTQFSLIIGTYLFSMGVGSWLSKYLEKDLIPKFLEIELAIGLVGGFSSAILYLSFGQIRYFQIPLFLLVILIGILVGLEIPVLLRILKKELQFKELVSRVLSLDYVGALLASILFPIFFAPKLGLMRTGFIFGILNVGVALWGTWVLPLRQSKIIILRAQSVVVLTLLILGFSYSDLITYYSEESLYTDEIILSKQTQYQRIIVTRWKNEIRLFLNGHLQFSSRDEYRYHETLVHPALLAHPTPKKVLVLGGGDGLAVREILKHKNVESVTLVDLDSAITNLFSEHGILKKLNEESLKNSKVTVINTDAFLWLEESDQIFDVVLIDFPDPSNFSLGKLYTTAFFHTLKRRMNETSVLEIQSTSPLFARSSYWCIERTIASLGFYTLPLHVYVPSFGEWGFVLAGQRPIQFKKDFPKDLKFLNIQELESIQTFPQDMSRVPVEINRLDNQALVRYYDREWNRILD.

Transmembrane regions (helical) follow at residues 7-27, 35-55, 67-87, 97-117, 134-154, and 163-183; these read ISVLIISSCGLVYELLAGTIA, VTQFSLIIGTYLFSMGVGSWL, FLEIELAIGLVGGFSSAILYL, IPLFLLVILIGILVGLEIPVL, VLSLDYVGALLASILFPIFFA, and GFIFGILNVGVALWGTWVLPL. Residues 196 to 446 form a spermidine synthase region; it reads VVVLTLLILG…AGQRPIQFKK (251 aa). In terms of domain architecture, PABS spans 200-439; it reads TLLILGFSYS…GEWGFVLAGQ (240 aa). Glutamine 234 lines the S-methyl-5'-thioadenosine pocket. The spermidine site is built by histidine 264 and aspartate 288. S-methyl-5'-thioadenosine is bound by residues aspartate 308 and 342-343; that span reads DA. Aspartate 360 acts as the Proton acceptor in catalysis.

Belongs to the spermidine/spermine synthase family. As to quaternary structure, homodimer or homotetramer.

It is found in the cell membrane. It carries out the reaction S-adenosyl 3-(methylsulfanyl)propylamine + putrescine = S-methyl-5'-thioadenosine + spermidine + H(+). Its pathway is amine and polyamine biosynthesis; spermidine biosynthesis; spermidine from putrescine: step 1/1. Catalyzes the irreversible transfer of a propylamine group from the amino donor S-adenosylmethioninamine (decarboxy-AdoMet) to putrescine (1,4-diaminobutane) to yield spermidine. The polypeptide is Polyamine aminopropyltransferase (Leptospira interrogans serogroup Icterohaemorrhagiae serovar copenhageni (strain Fiocruz L1-130)).